We begin with the raw amino-acid sequence, 305 residues long: tRNA dimethylallyltransferase (305 aa).

12-19 (GPTASGKT) provides a ligand contact to ATP. 14–19 (TASGKT) is a binding site for substrate. 3 interaction with substrate tRNA regions span residues 37 to 40 (DSAL), 161 to 165 (QRLAR), and 242 to 247 (RCVGYR).

This sequence belongs to the IPP transferase family. As to quaternary structure, monomer. It depends on Mg(2+) as a cofactor.

The catalysed reaction is adenosine(37) in tRNA + dimethylallyl diphosphate = N(6)-dimethylallyladenosine(37) in tRNA + diphosphate. Its function is as follows. Catalyzes the transfer of a dimethylallyl group onto the adenine at position 37 in tRNAs that read codons beginning with uridine, leading to the formation of N6-(dimethylallyl)adenosine (i(6)A). This is tRNA dimethylallyltransferase from Psychromonas ingrahamii (strain DSM 17664 / CCUG 51855 / 37).